Here is a 719-residue protein sequence, read N- to C-terminus: ATP-dependent RNA helicase SUV3 homolog, mitochondrial (719 aa).

The transit peptide at 1 to 18 (MRRASGVLRVLGGLTQRC) directs the protein to the mitochondrion. The tract at residues 16-42 (QRCSTSSTPSSSRFPAMNSRRKRNSVR) is disordered. The Helicase ATP-binding domain maps to 181 to 319 (EARSVTRKIF…PAAIDIVKKL (139 aa)). 194-201 (GPTNSGKT) serves as a coordination point for ATP. In terms of domain architecture, Helicase C-terminal spans 343-499 (KAIESYSNIE…PTYDQIETFS (157 aa)). A disordered region spans residues 662–692 (SKAAGSSKSSEGKRENPSKSEREKPNKRSSI). The span at 671–687 (SEGKRENPSKSEREKPN) shows a compositional bias: basic and acidic residues. Residues 693 to 717 (LEALLKRADISEDDLEQLREELNKN) adopt a coiled-coil conformation.

Belongs to the helicase family. Mg(2+) is required as a cofactor. Requires Mn(2+) as cofactor.

It localises to the mitochondrion matrix. Its subcellular location is the nucleus. It catalyses the reaction ATP + H2O = ADP + phosphate + H(+). ATPase and DNA/RNA helicase able to unwind DNA/DNA, DNA/RNA and RNA/RNA duplexes in the 5'-3' direction. This chain is ATP-dependent RNA helicase SUV3 homolog, mitochondrial, found in Caenorhabditis elegans.